Here is an 881-residue protein sequence, read N- to C-terminus: Alanine--tRNA ligase (881 aa).

Residues 422 to 440 show a composition bias toward basic and acidic residues; sequence FEDEMQKQKERARSARSTE. The disordered stretch occupies residues 422–445; it reads FEDEMQKQKERARSARSTEKSMGV. Zn(2+) contacts are provided by H567, H571, C669, and H673.

This sequence belongs to the class-II aminoacyl-tRNA synthetase family. Zn(2+) serves as cofactor.

The protein resides in the cytoplasm. The catalysed reaction is tRNA(Ala) + L-alanine + ATP = L-alanyl-tRNA(Ala) + AMP + diphosphate. Catalyzes the attachment of alanine to tRNA(Ala) in a two-step reaction: alanine is first activated by ATP to form Ala-AMP and then transferred to the acceptor end of tRNA(Ala). Also edits incorrectly charged Ser-tRNA(Ala) and Gly-tRNA(Ala) via its editing domain. The chain is Alanine--tRNA ligase from Pediococcus pentosaceus (strain ATCC 25745 / CCUG 21536 / LMG 10740 / 183-1w).